The chain runs to 575 residues: Arginine--tRNA ligase (575 aa).

The short motif at 122–132 is the 'HIGH' region element; that stretch reads PNVAKEMHVGH.

Belongs to the class-I aminoacyl-tRNA synthetase family. As to quaternary structure, monomer.

The protein resides in the cytoplasm. The enzyme catalyses tRNA(Arg) + L-arginine + ATP = L-arginyl-tRNA(Arg) + AMP + diphosphate. This Actinobacillus succinogenes (strain ATCC 55618 / DSM 22257 / CCUG 43843 / 130Z) protein is Arginine--tRNA ligase.